We begin with the raw amino-acid sequence, 386 residues long: G2/mitotic-specific cyclin-B2 (386 aa).

The segment at 45 to 64 (TNGKVGPSKKPSKASCAQKP) is disordered.

The protein belongs to the cyclin family. Cyclin AB subfamily. Interacts with the CDK1 protein kinase to form a serine/threonine kinase holoenzyme complex also known as maturation promoting factor (MPF). The cyclin subunit imparts substrate specificity to the complex.

Essential for the control of the cell cycle at the G2/M (mitosis) transition. This is G2/mitotic-specific cyclin-B2 (ccnb2) from Oryzias luzonensis (Luzon ricefish).